A 160-amino-acid polypeptide reads, in one-letter code: Cytochrome b6-f complex subunit 4 (160 aa).

The next 3 membrane-spanning stretches (helical) occupy residues 36–56, 95–115, and 131–151; these read LLYI…GLAV, LLGV…PFIE, and AVFL…TFPI.

It belongs to the cytochrome b family. PetD subfamily. As to quaternary structure, the 4 large subunits of the cytochrome b6-f complex are cytochrome b6, subunit IV (17 kDa polypeptide, petD), cytochrome f and the Rieske protein, while the 4 small subunits are petG, petL, petM and petN. The complex functions as a dimer.

It is found in the plastid. Its subcellular location is the cyanelle thylakoid membrane. Its function is as follows. Component of the cytochrome b6-f complex, which mediates electron transfer between photosystem II (PSII) and photosystem I (PSI), cyclic electron flow around PSI, and state transitions. The protein is Cytochrome b6-f complex subunit 4 of Cyanophora paradoxa.